The primary structure comprises 453 residues: Protein LIAT1 (453 aa).

The segment at 1–152 is disordered; the sequence is METRGPGLAV…HLPSDSSTVS (152 aa). The lysine-rich domain stretch occupies residues 82-103; it reads KRKVKKKKRKKKTKGSGKGDDK. Residues 83 to 96 are compositionally biased toward basic residues; sequence RKVKKKKRKKKTKG. Positions 106-117 are enriched in low complexity; the sequence is SQSLKSQPLSSS. The span at 125 to 145 shows a compositional bias: basic and acidic residues; that stretch reads CKERGPKPEHRQSKVEKKHLP. Positions 145–197 are interaction with ATE1; the sequence is PSDSSTVSLPDFAEIENLANRINESLRWDGILADPEAEKERIRIYKLNRRKRY. 20 tandem repeats follow at residues 201-210, 211-220, 221-230, 231-240, 241-250, 251-260, 261-270, 271-280, 281-290, 291-300, 301-310, 311-320, 321-330, 331-340, 341-350, 351-360, 361-370, 371-380, 381-390, and 391-400. Residues 201 to 400 are 20 X 10 AA approximate tandem repeat of A-L-K-G-F-H-P-D-P-E; sequence ALKGFHPDPE…ALKGFHTDPN (200 aa). Disordered regions lie at residues 225–306 and 320–432; these read FHPD…KGFH and EALK…CPNL. A compositionally biased stretch (basic and acidic residues) spans 320 to 396; sequence EALKGFHPDP…PDPEALKGFH (77 aa).

In terms of assembly, self-associates (via Lys-rich domain); targets LIAT1 to the nucleolus. Interacts with ATE1; it is not a substrate of ATE1, the interaction takes place in the cytoplasm and seems to increase ATE1 arginyltransferase activity. Interacts with JMJD6 and MRPS14. Post-translationally modified by JMJD6 lysyl-hydroxylase activity at its Lys-rich domain, which inhibits its self-association and nucleolar localization.

The protein resides in the nucleus. Its subcellular location is the nucleolus. It localises to the cytoplasm. Functionally, participates in nucleolar liquid-liquid phase separation (LLPS) through its N-terminal intrinsically disordered region (IDR). May be involved in ATE1-mediated N-terminal arginylation. The sequence is that of Protein LIAT1 from Homo sapiens (Human).